A 672-amino-acid chain; its full sequence is uncharacterized protein (672 aa).

Residues 1–24 (MKTLKTLKIFIIICIASVSLASFA) form the signal peptide. 6 helical membrane-spanning segments follow: residues 226–246 (IIGA…ALNK), 254–274 (IALF…LGPL), 410–430 (IILA…LYFI), 436–456 (CMIT…MALF), 469–489 (VCIS…LLIT), and 562–582 (VVSI…FYYF). Residues 626–672 (ASQGKPSVGDKPDVGGKRKEGEQQGGDSESGAGGGLADLASGSGGGK) form a disordered region. A compositionally biased stretch (basic and acidic residues) spans 633 to 647 (VGDKPDVGGKRKEGE). A compositionally biased stretch (gly residues) spans 656 to 672 (GAGGGLADLASGSGGGK).

It belongs to the TrbL/VirB6 family.

Its subcellular location is the cell membrane. This is an uncharacterized protein from Rickettsia felis (strain ATCC VR-1525 / URRWXCal2) (Rickettsia azadi).